The primary structure comprises 436 residues: MRLQHLADFKPQAATRAWASIPNPNGLPLIATATSDKSVRVYSLNNFTLHSTLEGGHERSVRSAAWKPGVRTDGALTIATGSFDATMGIWRRKEDAGNGNGNDGGDGPLEMEIGADGEVSKGAQLRRGGEEDEDEGDDWEFSIVLEGHDSEIKNVAYSPSGQWLASCSRDKTIWIWEEIGEEGEDEFETVAVLQDHKADVKCVCWRKDDGNGEVLASGSYDDTILLSREDGEGDWETVATLEGHEGTVWNLDWEPEVSMKTESSDESSAPATPRLLSSSADMSIRIWSKVPTPPPQNKPSYFNPGIPSTMRPGPENETWECTATLPKVHDLPIYSISWSKQTGRVVSTGGDGKIAIYEEQTKGRNSVGGTIEKEWVVLTVLEGAHGPYEINHVTWCQRFDNGKKTPDEEMVITTGDDGLTKAWCIEENVEERTLEA.

WD repeat units follow at residues 10–52 (KPQA…LHST) and 56–100 (GHER…GNGN). Disordered regions lie at residues 94–113 (EDAGNGNGNDGGDGPLEMEI) and 118–137 (EVSKGAQLRRGGEEDEDEGD). Gly residues predominate over residues 98-107 (NGNGNDGGDG). WD repeat units follow at residues 147-186 (GHDSEIKNVAYSPSGQWLASCSRDKTIWIWEEIGEEGEDE), 195-237 (DHKA…DWET), 243-297 (GHEG…PPQN), 328-367 (VHDLPIYSISWSKQTGRVVSTGGDGKIAIYEEQTKGRNSV), and 389-433 (EINH…EERT). The disordered stretch occupies residues 295–316 (PQNKPSYFNPGIPSTMRPGPEN).

This sequence belongs to the WD repeat CIA1 family.

Functionally, essential component of the cytosolic iron-sulfur (Fe/S) protein assembly machinery. Required for the maturation of extramitochondrial Fe/S proteins. The polypeptide is Probable cytosolic iron-sulfur protein assembly protein 1 (cia1) (Botryotinia fuckeliana (strain B05.10) (Noble rot fungus)).